A 313-amino-acid chain; its full sequence is Porphobilinogen deaminase (313 aa).

S-(dipyrrolylmethanemethyl)cysteine is present on Cys242.

The protein belongs to the HMBS family. Monomer. Dipyrromethane serves as cofactor.

The enzyme catalyses 4 porphobilinogen + H2O = hydroxymethylbilane + 4 NH4(+). Its pathway is porphyrin-containing compound metabolism; protoporphyrin-IX biosynthesis; coproporphyrinogen-III from 5-aminolevulinate: step 2/4. Functionally, tetrapolymerization of the monopyrrole PBG into the hydroxymethylbilane pre-uroporphyrinogen in several discrete steps. The chain is Porphobilinogen deaminase from Salmonella arizonae (strain ATCC BAA-731 / CDC346-86 / RSK2980).